Consider the following 340-residue polypeptide: Replication factor C subunit 5 (340 aa).

Met-1 is modified (N-acetylmethionine). 60–67 is an ATP binding site; the sequence is GPPGTGKT.

This sequence belongs to the activator 1 small subunits family. Subunit of the RFC complex, an heteropentameric complex consisting of a large subunit RFC1 and four small subunits RFC2, RFC3, RFC4 and RFC5; the RFC complex interacts with PCNA. Forms an heterotetrameric complex with RFC2, RFC3 and RFC4; this complex has ATPase activity but is not stimulated by PCNA. The heterotetramer of subunits RFC2, RFC3, RFC4 and RFC5 interacts with RAD17.

It is found in the nucleus. Functionally, subunit of the replication factor C (RFC) complex which acts during elongation of primed DNA templates by DNA polymerases delta and epsilon, and is necessary for ATP-dependent loading of proliferating cell nuclear antigen (PCNA) onto primed DNA. The polypeptide is Replication factor C subunit 5 (RFC5) (Homo sapiens (Human)).